The following is a 1281-amino-acid chain: SCL-interrupting locus protein homolog (1281 aa).

Composition is skewed to polar residues over residues 390–401 (VFKQSPLPNKLS), 461–475 (RNNS…NVNN), 528–560 (HLQS…STVH), 567–592 (EQEQ…SYSR), 770–790 (SKTT…STEQ), and 891–913 (QDIN…NTAE). 4 disordered regions span residues 390 to 431 (VFKQ…QVSR), 450 to 592 (KSAS…SYSR), 765 to 790 (AESE…STEQ), and 879 to 915 (RDDA…AEID).

It localises to the cytoplasm. The protein resides in the cytosol. The protein localises to the cytoskeleton. Its subcellular location is the microtubule organizing center. It is found in the centrosome. It localises to the centriole. Functionally, plays an essential role in early embryonic development. Plays an important role in the regulation of centriole duplication. The chain is SCL-interrupting locus protein homolog (stil) from Xenopus laevis (African clawed frog).